Here is a 265-residue protein sequence, read N- to C-terminus: 4-hydroxy-tetrahydrodipicolinate reductase (265 aa).

Position 16 to 21 (glycine 16 to methionine 21) interacts with NAD(+). Arginine 43 lines the NADP(+) pocket. NAD(+)-binding positions include glycine 106–threonine 108 and serine 130–phenylalanine 133. The Proton donor/acceptor role is filled by histidine 164. Position 165 (histidine 165) interacts with (S)-2,3,4,5-tetrahydrodipicolinate. Lysine 168 serves as the catalytic Proton donor. Residue alanine 174–threonine 175 coordinates (S)-2,3,4,5-tetrahydrodipicolinate.

This sequence belongs to the DapB family. As to quaternary structure, homotetramer.

It is found in the cytoplasm. It catalyses the reaction (S)-2,3,4,5-tetrahydrodipicolinate + NAD(+) + H2O = (2S,4S)-4-hydroxy-2,3,4,5-tetrahydrodipicolinate + NADH + H(+). The enzyme catalyses (S)-2,3,4,5-tetrahydrodipicolinate + NADP(+) + H2O = (2S,4S)-4-hydroxy-2,3,4,5-tetrahydrodipicolinate + NADPH + H(+). Its pathway is amino-acid biosynthesis; L-lysine biosynthesis via DAP pathway; (S)-tetrahydrodipicolinate from L-aspartate: step 4/4. Its function is as follows. Catalyzes the conversion of 4-hydroxy-tetrahydrodipicolinate (HTPA) to tetrahydrodipicolinate. In Wigglesworthia glossinidia brevipalpis, this protein is 4-hydroxy-tetrahydrodipicolinate reductase.